The sequence spans 28 residues: Ranatuerin-2AVa (28 aa).

The cysteines at positions 23 and 28 are disulfide-linked.

In terms of tissue distribution, expressed by the skin glands.

It localises to the secreted. In terms of biological role, has antibacterial activity against the Gram positive bacterium L.lactis. The polypeptide is Ranatuerin-2AVa (Rana arvalis (Moor frog)).